Here is a 364-residue protein sequence, read N- to C-terminus: Aminomethyltransferase (364 aa).

The protein belongs to the GcvT family. In terms of assembly, the glycine cleavage system is composed of four proteins: P, T, L and H.

It catalyses the reaction N(6)-[(R)-S(8)-aminomethyldihydrolipoyl]-L-lysyl-[protein] + (6S)-5,6,7,8-tetrahydrofolate = N(6)-[(R)-dihydrolipoyl]-L-lysyl-[protein] + (6R)-5,10-methylene-5,6,7,8-tetrahydrofolate + NH4(+). The glycine cleavage system catalyzes the degradation of glycine. The protein is Aminomethyltransferase of Desulforamulus reducens (strain ATCC BAA-1160 / DSM 100696 / MI-1) (Desulfotomaculum reducens).